A 504-amino-acid polypeptide reads, in one-letter code: Arabinose import ATP-binding protein AraG (504 aa).

ABC transporter domains follow at residues 8–243 (LSFR…MVGR) and 256–499 (YGEE…MPKV). Residue 40-47 (GENGAGKS) participates in ATP binding.

This sequence belongs to the ABC transporter superfamily. Arabinose importer (TC 3.A.1.2.2) family. The complex is composed of two ATP-binding proteins (AraG), two transmembrane proteins (AraH) and a solute-binding protein (AraF).

The protein resides in the cell inner membrane. The enzyme catalyses L-arabinose(out) + ATP + H2O = L-arabinose(in) + ADP + phosphate + H(+). Functionally, part of the ABC transporter complex AraFGH involved in arabinose import. Responsible for energy coupling to the transport system. This chain is Arabinose import ATP-binding protein AraG, found in Shigella boydii serotype 4 (strain Sb227).